Consider the following 152-residue polypeptide: Small ribosomal subunit protein uS13 (152 aa).

Belongs to the universal ribosomal protein uS13 family. Part of the 30S ribosomal subunit. Forms a loose heterodimer with protein S19. Forms two bridges to the 50S subunit in the 70S ribosome.

In terms of biological role, located at the top of the head of the 30S subunit, it contacts several helices of the 16S rRNA. In the 70S ribosome it contacts the 23S rRNA (bridge B1a) and protein L5 of the 50S subunit (bridge B1b), connecting the 2 subunits; these bridges are implicated in subunit movement. The sequence is that of Small ribosomal subunit protein uS13 from Pyrobaculum aerophilum (strain ATCC 51768 / DSM 7523 / JCM 9630 / CIP 104966 / NBRC 100827 / IM2).